The sequence spans 107 residues: Large ribosomal subunit protein uL24 (107 aa).

This sequence belongs to the universal ribosomal protein uL24 family. Part of the 50S ribosomal subunit.

One of two assembly initiator proteins, it binds directly to the 5'-end of the 23S rRNA, where it nucleates assembly of the 50S subunit. Its function is as follows. One of the proteins that surrounds the polypeptide exit tunnel on the outside of the subunit. In Nitrosomonas eutropha (strain DSM 101675 / C91 / Nm57), this protein is Large ribosomal subunit protein uL24.